Reading from the N-terminus, the 828-residue chain is Sarcolemmal membrane-associated protein (828 aa).

A necessary for targeting to centrosomes region spans residues 1–163 (MPSALAIFTC…AANTPSMYSQ (163 aa)). Residues 1–802 (MPSALAIFTC…REKGNNKPWP (802 aa)) are Cytoplasmic-facing. An FHA domain is found at 28-85 (IKIGRSVARCRPAQNNATFDCKVLSRNHALVWFDHKTGKFYLQDTKSSNGTFINSQRL). Serine 148 bears the Phosphoserine mark. Coiled coils occupy residues 167–202 (QLSQYLQEALHREQMLEQKLATLQRLLAITQEASDT) and 230–388 (NQTE…QEKT). The chain crosses the membrane as a helical; Anchor for type IV membrane protein span at residues 339–359 (KKELQHKIDEMEEKEQELQAK). Positions 433–446 (KLSKENQTRAKESD) are enriched in basic and acidic residues. The segment at 433 to 467 (KLSKENQTRAKESDFSDTLSPSKEKSSDDTTDAQM) is disordered. A phosphoserine mark is found at serine 448 and serine 452. A coiled-coil region spans residues 477–799 (AKVSLLKDDL…KLLREKGNNK (323 aa)). Residues 803–823 (WMPMLAALVAVTAIVLYVPGL) form a helical; Anchor for type IV membrane protein membrane-spanning segment. Residues 824–828 (ARASP) lie on the Extracellular side of the membrane.

The protein belongs to the SLMAP family. Homodimer. Interacts with myosin. Interacts with SIKE1 and both associate with the STRIPAK core complex composed of PP2A catalytic and scaffolding subunits, the striatins (PP2A regulatory subunits), the striatin-associated proteins MOB4, STRIP1 and STRIP2, PDCD10 and members of the STE20 kinases, such as STK24 and STK26. Interacts (via FHA domain) with STK3 (when phosphorylated); the interaction associates STK3 with the STRIPAK complex.

The protein localises to the cell membrane. It is found in the sarcolemma. The protein resides in the cytoplasm. It localises to the myofibril. Its subcellular location is the sarcomere. The protein localises to the m line. It is found in the z line. The protein resides in the cytoskeleton. It localises to the microtubule organizing center. Its subcellular location is the centrosome. The protein localises to the endoplasmic reticulum membrane. It is found in the mitochondrion membrane. Functionally, associates with the striatin-interacting phosphatase and kinase (STRIPAK) core complex, forming the extended (SIKE1:SLMAP)STRIPAK complex. The (SIKE1:SLMAP)STRIPAK complex dephosphorylates STK3 leading to the inhibition of Hippo signaling and the control of cell growth. May play a role during myoblast fusion. The polypeptide is Sarcolemmal membrane-associated protein (Homo sapiens (Human)).